We begin with the raw amino-acid sequence, 582 residues long: Sulfite reductase [NADPH] hemoprotein beta-component (582 aa).

The segment covering 1-12 (MDLKVKVDRSRD) has biased composition (basic and acidic residues). The tract at residues 1 to 26 (MDLKVKVDRSRDVSQPLDKLGPDETL) is disordered. Residues cysteine 447, cysteine 453, cysteine 492, and cysteine 496 each coordinate [4Fe-4S] cluster. A siroheme-binding site is contributed by cysteine 496.

The protein belongs to the nitrite and sulfite reductase 4Fe-4S domain family. As to quaternary structure, alpha(8)-beta(8). The alpha component is a flavoprotein, the beta component is a hemoprotein. Siroheme serves as cofactor. The cofactor is [4Fe-4S] cluster.

The enzyme catalyses hydrogen sulfide + 3 NADP(+) + 3 H2O = sulfite + 3 NADPH + 4 H(+). It participates in sulfur metabolism; hydrogen sulfide biosynthesis; hydrogen sulfide from sulfite (NADPH route): step 1/1. In terms of biological role, component of the sulfite reductase complex that catalyzes the 6-electron reduction of sulfite to sulfide. This is one of several activities required for the biosynthesis of L-cysteine from sulfate. The protein is Sulfite reductase [NADPH] hemoprotein beta-component of Afipia carboxidovorans (strain ATCC 49405 / DSM 1227 / KCTC 32145 / OM5) (Oligotropha carboxidovorans).